The sequence spans 388 residues: LIM/homeobox protein Lhx9 (388 aa).

LIM zinc-binding domains are found at residues 69-130 and 131-193; these read ISDR…CHLG and ISAS…LSYT. 3 disordered regions span residues 239–263, 321–356, and 369–388; these read ENEA…RMRT, ENGG…LTDL, and SNMD…TNLF. The segment at residues 267-326 is a DNA-binding region (homeobox); sequence HHQLRTMKSYFAINHNPDAKDLKQLAQKTGLTKRVLQVWFQNARAKFRRNLLRQENGGVD. Low complexity predominate over residues 344-356; sequence LTPPGTATTLTDL. Polar residues predominate over residues 376–388; the sequence is SGSPSQTTLTNLF.

As to quaternary structure, interacts with LDB1 and LDB2.

It localises to the nucleus. Functionally, involved in gonadal development. In Rattus norvegicus (Rat), this protein is LIM/homeobox protein Lhx9 (Lhx9).